Consider the following 247-residue polypeptide: Synaptonemal complex central element protein 1-like (247 aa).

Positions 71-196 (SEELGEAQAL…LQEARETWDS (126 aa)) form a coiled coil. The segment at 189-247 (EARETWDSPGNCGLKTELEELEGQSQRSPEAQNDKGEASQEEQHHLETSEELPRTGTLC) is disordered. Over residues 220–241 (QNDKGEASQEEQHHLETSEELP) the composition is skewed to basic and acidic residues.

The protein belongs to the SYCE family. As to expression, isoform 1 is abundantly expressed in testis and weakly in ovary, it is not found in other tissues. Isoform 2 is expressed in testis and poorly in brain, heart, lung and other examined tissues.

Its function is as follows. May be involved in meiosis. Isoform 1 may be involved in meiosis during spermatogenesis while isoform 2 is probably related to a later stage of meiosis, in the development stage of secondary spermatocytes and spermatids. The protein is Synaptonemal complex central element protein 1-like (Syce1l) of Mus musculus (Mouse).